Consider the following 784-residue polypeptide: ATP-dependent 6-phosphofructokinase, platelet type (784 aa).

M1 bears the N-acetylmethionine mark. Residues 1 to 399 (MDADDSRAPK…NLNTYKRLAI (399 aa)) are N-terminal catalytic PFK domain 1. Phosphoserine is present on residues S6, S12, and S21. Residues G34, 97–98 (RC), and 127–130 (GDGS) each bind ATP. Position 128 (D128) interacts with Mg(2+). S142 carries the phosphoserine modification. Substrate-binding positions include 173–175 (SID), R210, 217–219 (MGR), E273, R301, and 307–310 (HVQR). The active-site Proton acceptor is D175. Phosphoserine is present on S386. K395 is subject to N6-acetyllysine. An interdomain linker region spans residues 400–411 (KLPDDQIPKTNC). Residues 412–784 (NVAVINVGAP…QLEHVQPWSV (373 aa)) are C-terminal regulatory PFK domain 2. Beta-D-fructose 2,6-bisphosphate is bound at residue R481. K486 is modified (N6-acetyllysine). Beta-D-fructose 2,6-bisphosphate is bound by residues 538–542 (TVSNN), R576, 583–585 (MGG), and E639. The O-linked (GlcNAc) serine glycan is linked to S540. At Y651 the chain carries Phosphotyrosine. Residues R665 and 671–674 (HMQQ) each bind beta-D-fructose 2,6-bisphosphate. K688 carries the post-translational modification N6-acetyllysine. Residue R744 coordinates beta-D-fructose 2,6-bisphosphate. A Phosphoserine modification is found at S783.

This sequence belongs to the phosphofructokinase type A (PFKA) family. ATP-dependent PFK group I subfamily. Eukaryotic two domain clade 'E' sub-subfamily. Homo- and heterotetramers. Phosphofructokinase (PFK) enzyme functions as a tetramer composed of different combinations of 3 types of subunits, called PFKM (where M stands for Muscle), PFKL (Liver) and PFKP (Platelet). The composition of the PFK tetramer differs according to the tissue type it is present in. In muscles, it is composed of 4 PFKM subunits (also called M4). In the liver, the predominant form is a tetramer of PFKL subunits (L4). In erythrocytes, both PFKM and PFKL subunits randomly tetramerize to form M4, L4 and other combinations (ML3, M2L2, M3L). In platelets, brain and fibroblasts, PFK contains a higher proportion of PFKP subunits. The kinetic and regulatory properties of the tetrameric enzyme are dependent on the subunit composition, hence can vary across tissues. Interacts with ATG4B; promoting phosphorylation of ATG4B. Mg(2+) is required as a cofactor. Phosphorylation at Ser-386 promotes interaction with ATG4B. Post-translationally, glcNAcylation decreases enzyme activity.

It is found in the cytoplasm. It carries out the reaction beta-D-fructose 6-phosphate + ATP = beta-D-fructose 1,6-bisphosphate + ADP + H(+). It participates in carbohydrate degradation; glycolysis; D-glyceraldehyde 3-phosphate and glycerone phosphate from D-glucose: step 3/4. Its activity is regulated as follows. Allosterically activated by ADP, AMP, or fructose 2,6-bisphosphate, and allosterically inhibited by ATP or citrate. Catalyzes the phosphorylation of D-fructose 6-phosphate to fructose 1,6-bisphosphate by ATP, the first committing step of glycolysis. The chain is ATP-dependent 6-phosphofructokinase, platelet type (PFKP) from Homo sapiens (Human).